Here is a 357-residue protein sequence, read N- to C-terminus: DENN domain-containing protein 10 (357 aa).

The uDENN domain occupies 1–136 (MAAVVAMDTQ…IAVLTKGICQ (136 aa)). Residues 152-299 (KAYLAGSIKD…PEKSDSQVIQ (148 aa)) enclose the cDENN domain. Positions 301 to 357 (IALKTKEIFTHLAPFSEVSDDGGKVILNVEALKQQRFPPATENFLYHLAAAEQMLKV) constitute a dDENN domain.

The protein belongs to the DENND10 family. Interacts with the coiled-coil heterodimer of CCDC22 and CCDC93; the interaction is direct. Interacts with RAB27A and RAB27B (GDP-bound forms preferentially).

The protein resides in the late endosome. Guanine nucleotide exchange factor (GEF) regulating homeostasis of late endocytic pathway, including endosomal positioning, maturation and secretion, possibly through activating Rab proteins such as RAB27A and RAB27B. Promotes the exchange of GDP to GTP, converting inactive GDP-bound RAB27A and RAB27B into their active GTP-bound form. The polypeptide is DENN domain-containing protein 10 (Mus musculus (Mouse)).